Reading from the N-terminus, the 385-residue chain is Arginine biosynthesis bifunctional protein ArgJ (385 aa).

Substrate contacts are provided by threonine 142, lysine 168, threonine 179, glutamate 259, asparagine 380, and threonine 385. Threonine 179 serves as the catalytic Nucleophile.

Belongs to the ArgJ family. In terms of assembly, heterotetramer of two alpha and two beta chains.

Its subcellular location is the cytoplasm. The enzyme catalyses N(2)-acetyl-L-ornithine + L-glutamate = N-acetyl-L-glutamate + L-ornithine. It catalyses the reaction L-glutamate + acetyl-CoA = N-acetyl-L-glutamate + CoA + H(+). Its pathway is amino-acid biosynthesis; L-arginine biosynthesis; L-ornithine and N-acetyl-L-glutamate from L-glutamate and N(2)-acetyl-L-ornithine (cyclic): step 1/1. It participates in amino-acid biosynthesis; L-arginine biosynthesis; N(2)-acetyl-L-ornithine from L-glutamate: step 1/4. Its function is as follows. Catalyzes two activities which are involved in the cyclic version of arginine biosynthesis: the synthesis of N-acetylglutamate from glutamate and acetyl-CoA as the acetyl donor, and of ornithine by transacetylation between N(2)-acetylornithine and glutamate. This chain is Arginine biosynthesis bifunctional protein ArgJ, found in Leptospira interrogans serogroup Icterohaemorrhagiae serovar Lai (strain 56601).